Consider the following 308-residue polypeptide: Olfactory receptor 5H19 (308 aa).

At 1–27 the chain is on the extracellular side; the sequence is MEKNATLLTEFVLTGLSHQPLWNIPLF. Asparagine 4 is a glycosylation site (N-linked (GlcNAc...) asparagine). Residues 28 to 48 form a helical membrane-spanning segment; it reads LVFLVIYLITIVGNVSLITLI. The Cytoplasmic portion of the chain corresponds to 49 to 55; it reads WTDPHLH. Residues 56–76 traverse the membrane as a helical segment; sequence IPMYLFLGSLAFVDTSISSIV. The Extracellular segment spans residues 77 to 92; the sequence is VPKMLLNFFGKSKVIT. The helical transmembrane segment at 93-113 threads the bilayer; that stretch reads LSECMAQFFLFNISATTECFL. Cysteine 96 and cysteine 188 are oxidised to a cystine. Over 114–143 the chain is Cytoplasmic; it reads LAAMAYDRYVAICKPLLYPVVMTNGLCVWL. Residues 144–164 traverse the membrane as a helical segment; the sequence is IALSFVAGIIHALIHEGFLLR. Residues 165-197 lie on the Extracellular side of the membrane; it reads LTFCNSNMIHNFYCDIISLLKISCTDTSLNYLI. Residues 198 to 218 traverse the membrane as a helical segment; it reads VFIFSGSIQVFTISTILVSYT. Residues 219–238 lie on the Cytoplasmic side of the membrane; sequence IILFTILKKKSAKGIKKAFS. The helical transmembrane segment at 239-259 threads the bilayer; the sequence is TCGAHLLSVSLYYGPLLFMYV. Topologically, residues 260–270 are extracellular; that stretch reads HPASSEVDDQD. Residues 271–291 traverse the membrane as a helical segment; it reads MIDSLFYTVIIPVLNPIIYSL. At 292–308 the chain is on the cytoplasmic side; it reads RNKQVIDSLAKFLKRNV.

Belongs to the G-protein coupled receptor 1 family.

Its subcellular location is the cell membrane. Functionally, potential odorant receptor. This Mus musculus (Mouse) protein is Olfactory receptor 5H19.